Here is a 393-residue protein sequence, read N- to C-terminus: METFLFTSESVNEGHPDKLCDQVSDAVLDACLAQDPESKVACETCTKTNMVMVFGEITTKAEVDYEKIVRDTCRSIGFTSDDVGLDADKCKVLVNIEQQSPDIAQGVHGHLTKRPEEIGAGDQGHMFGYATDETPELMPLSHVLATKLGARLTEVRKNGACAWLRPDGKTQVTVEYYNDNGAMVPVRVHTVLISTQHDETVSNDEIAADLKEHVIKPVIPEKYLDEKTIFHLNPSGRFVIGGPHGDAGLTGRKIIIDTYGGWGAHGGGAFSGKDPTKVDRSGAYIVRQAAKSIVANGLARRAIVQVSYAIGVPEPLSVFVDTYGTGKIPDKEILKIVKETFDFRPGMMSINLDLKRGGNGRFQKTAAYGHFGRDDPDFTWEVVKPLKWEKIPA.

Residue Glu9 coordinates Mg(2+). Position 15 (His15) interacts with ATP. Glu43 serves as a coordination point for K(+). L-methionine-binding residues include Glu56 and Gln99. ATP is bound by residues 167-169 (DGK), 235-238 (SGRF), Asp246, 252-253 (RK), Ala269, Lys273, and Lys277. L-methionine is bound at residue Asp246. Lys277 lines the L-methionine pocket.

This sequence belongs to the AdoMet synthase family. As to quaternary structure, homotetramer. Mn(2+) is required as a cofactor. Requires Mg(2+) as cofactor. Co(2+) serves as cofactor. It depends on K(+) as a cofactor.

It is found in the cytoplasm. The catalysed reaction is L-methionine + ATP + H2O = S-adenosyl-L-methionine + phosphate + diphosphate. It functions in the pathway amino-acid biosynthesis; S-adenosyl-L-methionine biosynthesis; S-adenosyl-L-methionine from L-methionine: step 1/1. In terms of biological role, catalyzes the formation of S-adenosylmethionine from methionine and ATP. The reaction comprises two steps that are both catalyzed by the same enzyme: formation of S-adenosylmethionine (AdoMet) and triphosphate, and subsequent hydrolysis of the triphosphate. May be involved in the synthesis of betain in response to abiotic stress such as high salinity. The polypeptide is S-adenosylmethionine synthase 2 (SAMS2) (Beta vulgaris (Sugar beet)).